The primary structure comprises 353 residues: DNA polymerase IV (353 aa).

The UmuC domain maps to 14-198; that stretch reads IIHIDMDAFF…MDISKFHGVG (185 aa). Mg(2+)-binding residues include D18 and D116. E117 is an active-site residue.

It belongs to the DNA polymerase type-Y family. As to quaternary structure, monomer. Mg(2+) serves as cofactor.

It is found in the cytoplasm. The catalysed reaction is DNA(n) + a 2'-deoxyribonucleoside 5'-triphosphate = DNA(n+1) + diphosphate. Poorly processive, error-prone DNA polymerase involved in untargeted mutagenesis. Copies undamaged DNA at stalled replication forks, which arise in vivo from mismatched or misaligned primer ends. These misaligned primers can be extended by PolIV. Exhibits no 3'-5' exonuclease (proofreading) activity. May be involved in translesional synthesis, in conjunction with the beta clamp from PolIII. In Streptococcus pneumoniae serotype 4 (strain ATCC BAA-334 / TIGR4), this protein is DNA polymerase IV.